Here is a 204-residue protein sequence, read N- to C-terminus: Putative uracil phosphoribosyltransferase urg2 (204 aa).

5-phospho-alpha-D-ribose 1-diphosphate is bound by residues Arg75, Arg100, and Asp126–Thr134. A D-ribose 5-phosphate-binding site is contributed by Tyr187. Residues Leu188 and Gly193–Ile195 each bind uracil. Asp194 is a binding site for 5-phospho-alpha-D-ribose 1-diphosphate.

Belongs to the UPRTase family. Mg(2+) serves as cofactor.

Its subcellular location is the cytoplasm. It localises to the nucleus. The catalysed reaction is UMP + diphosphate = 5-phospho-alpha-D-ribose 1-diphosphate + uracil. It participates in pyrimidine metabolism; UMP biosynthesis via salvage pathway; UMP from uracil: step 1/1. With respect to regulation, allosterically activated by GTP. In terms of biological role, catalyzes the conversion of uracil and 5-phospho-alpha-D-ribose 1-diphosphate (PRPP) to UMP and diphosphate. This chain is Putative uracil phosphoribosyltransferase urg2, found in Schizosaccharomyces pombe (strain 972 / ATCC 24843) (Fission yeast).